The following is a 1032-amino-acid chain: GPI inositol-deacylase (1032 aa).

A glycan (N-linked (GlcNAc...) asparagine) is linked at Asn12. Residues 15-35 form a helical membrane-spanning segment; sequence ILTLVSFFGLVLFYLTWYLYT. The active site involves Ser195. 2 N-linked (GlcNAc...) asparagine glycosylation sites follow: Asn520 and Asn555. The next 2 helical transmembrane spans lie at 703–723 and 740–760; these read LATI…QVKH and ICSP…TPIM. An N-linked (GlcNAc...) asparagine glycan is attached at Asn784. 3 helical membrane-spanning segments follow: residues 805–825, 861–880, and 884–903; these read LWFI…LTFY, WANR…PIYM, and FAYV…ILVA. Asn907 is a glycosylation site (N-linked (GlcNAc...) asparagine). Residues 916-936 traverse the membrane as a helical segment; it reads SLLMLMLWVLPINVPILVVFV. Asn938 and Asn942 each carry an N-linked (GlcNAc...) asparagine glycan. 2 helical membrane-spanning segments follow: residues 943-963 and 985-1005; these read WTTP…ILLM and AFLA…TYWI.

It belongs to the GPI inositol-deacylase family.

It is found in the endoplasmic reticulum membrane. Its function is as follows. Involved in inositol deacylation of GPI-anchored proteins which plays important roles in the quality control and ER-associated degradation of GPI-anchored proteins. This is GPI inositol-deacylase (BST1) from Debaryomyces hansenii (strain ATCC 36239 / CBS 767 / BCRC 21394 / JCM 1990 / NBRC 0083 / IGC 2968) (Yeast).